The chain runs to 372 residues: Methylthioribose-1-phosphate isomerase 2 (372 aa).

The Proton donor role is filled by aspartate 254.

Belongs to the eIF-2B alpha/beta/delta subunits family. MtnA subfamily.

The protein localises to the cytoplasm. It localises to the nucleus. It catalyses the reaction 5-(methylsulfanyl)-alpha-D-ribose 1-phosphate = 5-(methylsulfanyl)-D-ribulose 1-phosphate. It participates in amino-acid biosynthesis; L-methionine biosynthesis via salvage pathway; L-methionine from S-methyl-5-thio-alpha-D-ribose 1-phosphate: step 1/6. Its function is as follows. Catalyzes the interconversion of methylthioribose-1-phosphate (MTR-1-P) into methylthioribulose-1-phosphate (MTRu-1-P). This is Methylthioribose-1-phosphate isomerase 2 from Trypanosoma cruzi (strain CL Brener).